A 566-amino-acid chain; its full sequence is Macrophage colony-stimulating factor 1 (566 aa).

Positions 1-32 (MTARGAAGRCPSSTWMGSRLLLVCLLVSRSVA) are cleaved as a signal peptide. Over 33 to 508 (EVSEHCSHMI…SSIQDPQTSA (476 aa)) the chain is Extracellular. 3 N-linked (GlcNAc...) asparagine glycosylation sites follow: N106, N153, and N171. Disordered stretches follow at residues 197-417 (PSSD…KLLP) and 434-484 (GKKS…GAAR). Polar residues predominate over residues 253 to 265 (PRSTCQTLESTEQ). S302 carries an O-linked (Xyl...) (chondroitin sulfate) serine glycan. The span at 348–360 (DQQPTNITDTPLT) shows a compositional bias: polar residues. N-linked (GlcNAc...) asparagine glycosylation is present at N353. O-linked (GalNAc...) threonine glycans are attached at residues T355 and T357. Positions 377-394 (EKTDGSSTLREDQQEPRS) are enriched in basic and acidic residues. Polar residues predominate over residues 400–410 (LNPQRVGNSAT). The segment covering 434 to 445 (GKKSTRDRRSPA) has biased composition (basic and acidic residues). The chain crosses the membrane as a helical span at residues 509 to 531 (FVFWVLGIILVLLAVGGLLFYSW). Residues 532–566 (KRRSHRDPRTLDSSVGRPEGSSLAQDEDRQVELPV) are Cytoplasmic-facing. Positions 538 to 566 (DPRTLDSSVGRPEGSSLAQDEDRQVELPV) are disordered. Over residues 557–566 (DEDRQVELPV) the composition is skewed to basic and acidic residues.

Homodimer or heterodimer; disulfide-linked. Likely to exist in multiple forms: homodimer consisting of 2 identical 150-200 kDa proteoglycan subunits, heterodimer consisting of a 150-200 kDa proteoglycan subunit and a truncated 43 kDa subunit, and a homodimer consisting of 2 identical 43 kDa subunits. Interacts with CSF1R. In terms of processing, N-glycosylated. Post-translationally, O-glycosylated; contains chondroitin sulfate.

It localises to the cell membrane. Its subcellular location is the secreted. The protein localises to the extracellular space. In terms of biological role, cytokine that plays an essential role in the regulation of survival, proliferation and differentiation of hematopoietic precursor cells, especially mononuclear phagocytes, such as macrophages and monocytes. Promotes the release of pro-inflammatory chemokines, and thereby plays an important role in innate immunity and in inflammatory processes. Plays an important role in the regulation of osteoclast proliferation and differentiation, the regulation of bone resorption, and is required for normal bone development. Required for normal male and female fertility. Promotes reorganization of the actin cytoskeleton, regulates formation of membrane ruffles, cell adhesion and cell migration. Plays a role in lipoprotein clearance. The protein is Macrophage colony-stimulating factor 1 (Csf1) of Rattus norvegicus (Rat).